The chain runs to 203 residues: Protein GrpE (203 aa).

Over residues 1-20 the composition is skewed to basic and acidic residues; it reads MSSKEQNVHEEQVSKEKEGM. The segment at 1–38 is disordered; it reads MSSKEQNVHEEQVSKEKEGMESVMNESQEQVKSEDAQA.

Belongs to the GrpE family. As to quaternary structure, homodimer.

Its subcellular location is the cytoplasm. Functionally, participates actively in the response to hyperosmotic and heat shock by preventing the aggregation of stress-denatured proteins, in association with DnaK and GrpE. It is the nucleotide exchange factor for DnaK and may function as a thermosensor. Unfolded proteins bind initially to DnaJ; upon interaction with the DnaJ-bound protein, DnaK hydrolyzes its bound ATP, resulting in the formation of a stable complex. GrpE releases ADP from DnaK; ATP binding to DnaK triggers the release of the substrate protein, thus completing the reaction cycle. Several rounds of ATP-dependent interactions between DnaJ, DnaK and GrpE are required for fully efficient folding. This chain is Protein GrpE, found in Proteus mirabilis (strain HI4320).